The primary structure comprises 539 residues: Phenylalanine--tRNA ligase beta subunit (539 aa).

The B5 domain maps to 271–347 (LSPARWTVTT…KSYGYENLKA (77 aa)). Residues Asp325, Asp331, Glu334, and Asp335 each contribute to the Mg(2+) site.

The protein belongs to the phenylalanyl-tRNA synthetase beta subunit family. Type 2 subfamily. In terms of assembly, tetramer of two alpha and two beta subunits. Mg(2+) serves as cofactor.

It localises to the cytoplasm. It carries out the reaction tRNA(Phe) + L-phenylalanine + ATP = L-phenylalanyl-tRNA(Phe) + AMP + diphosphate + H(+). The chain is Phenylalanine--tRNA ligase beta subunit from Methanothrix thermoacetophila (strain DSM 6194 / JCM 14653 / NBRC 101360 / PT) (Methanosaeta thermophila).